The primary structure comprises 186 residues: Spermidine N(1)-acetyltransferase (186 aa).

One can recognise an N-acetyltransferase domain in the interval 7 to 167; sequence VKLRPLERED…NAIRMCIFQH (161 aa). Spermine is bound by residues Met30, Glu35, Glu43, and 51-54; that span reads HIHD. Residue Glu35 coordinates Mg(2+). Residues Glu35 and Glu43 each contribute to the spermidine site. Glu76 lines the Mg(2+) pocket. 85–87 is a binding site for spermine; that stretch reads EFQ. Residues 88–90, 95–101, and 128–137 each bind acetyl-CoA; these read III, QGKGLAT, and NEKAIHIYRK. The active-site Proton donor is Tyr135.

This sequence belongs to the acetyltransferase family. In terms of assembly, homododecamer.

It is found in the cytoplasm. The catalysed reaction is an alkane-alpha,omega-diamine + acetyl-CoA = an N-acetylalkane-alpha,omega-diamine + CoA + H(+). It catalyses the reaction spermidine + acetyl-CoA = N(1)-acetylspermidine + CoA + H(+). The enzyme catalyses spermidine + acetyl-CoA = N(8)-acetylspermidine + CoA + H(+). It carries out the reaction spermine + acetyl-CoA = N(1)-acetylspermine + CoA + H(+). The protein operates within amine and polyamine degradation; spermidine degradation. Its pathway is amine and polyamine degradation; spermine degradation. Its function is as follows. Involved in the protection against polyamine toxicity by regulating their concentration. Catalyzes the transfer of an acetyl group from acetyl coenzyme A (AcCoA) to the primary amino groups of spermidine to yield N(1)- and N(8)-acetylspermidine. It can also use spermine. The protein is Spermidine N(1)-acetyltransferase (speG) of Escherichia coli O157:H7.